A 329-amino-acid chain; its full sequence is Glycerol-3-phosphate dehydrogenase [NAD(P)+] (329 aa).

4 residues coordinate NADPH: Ser10, Trp11, Arg31, and Lys105. Sn-glycerol 3-phosphate contacts are provided by Lys105, Gly134, and Ser136. An NADPH-binding site is contributed by Ala138. Sn-glycerol 3-phosphate is bound by residues Lys189, Asp242, Ser252, Arg253, and Asn254. The active-site Proton acceptor is Lys189. Residue Arg253 coordinates NADPH. Residues Val277 and Glu279 each contribute to the NADPH site.

This sequence belongs to the NAD-dependent glycerol-3-phosphate dehydrogenase family.

Its subcellular location is the cytoplasm. The enzyme catalyses sn-glycerol 3-phosphate + NAD(+) = dihydroxyacetone phosphate + NADH + H(+). It carries out the reaction sn-glycerol 3-phosphate + NADP(+) = dihydroxyacetone phosphate + NADPH + H(+). The protein operates within membrane lipid metabolism; glycerophospholipid metabolism. Functionally, catalyzes the reduction of the glycolytic intermediate dihydroxyacetone phosphate (DHAP) to sn-glycerol 3-phosphate (G3P), the key precursor for phospholipid synthesis. This chain is Glycerol-3-phosphate dehydrogenase [NAD(P)+], found in Neisseria gonorrhoeae (strain ATCC 700825 / FA 1090).